A 483-amino-acid chain; its full sequence is Serine/threonine-protein phosphatase 2A regulatory subunit phr2AB (483 aa).

2 WD repeats span residues 22 to 61 (SDANVVPAIEFDQTGDFIAVGDKGGKVLLLKRTHDKQSSK) and 88 to 129 (EIEE…IKQV). The tract at residues 132 to 152 (SATTTGPSYNGSLASNNTRSP) is disordered. WD repeat units lie at residues 206 to 244 (AHAYHINSISLNSDGETYISSDDLRIHLWNLNINTECFN), 255 to 295 (DLTE…LCDN), 314 to 352 (EIISSISDIKFSRDGRYILSRDFLTLKLWDINMENKPVK), and 369 to 410 (ENDC…DVCL). Positions 421–443 (TKTLTTKMKLRSSKKEPKKPEDI) are disordered. Over residues 433-443 (SKKEPKKPEDI) the composition is skewed to basic and acidic residues. A WD 7 repeat occupies 449 to 483 (EYTKKTLHCAWHPKDNLIAVGAANTVYLYAATENK).

This sequence belongs to the phosphatase 2A regulatory subunit B family. In terms of assembly, PP2A consists of a trimeric holoenzyme, composed of a 37 kDa catalytic subunit (C subunit) and a 65 kDa constant regulatory subunit (A subunit), that associates with a variety of regulatory subunits (B subunit) such as phr2AB (B55) and psrA (B56 homolog). The trimer may partially dissociates into a core 'AC' dimer equally active compared to the trimer.

The protein resides in the cytoplasm. Its subcellular location is the cytosol. The protein localises to the cytoskeleton. It localises to the microtubule organizing center. It is found in the centrosome. In terms of biological role, the B regulatory subunit might modulate substrate selectivity and catalytic activity, and might also direct the localization of the catalytic enzyme to a particular subcellular compartment. This is Serine/threonine-protein phosphatase 2A regulatory subunit phr2AB (phr2aB) from Dictyostelium discoideum (Social amoeba).